Here is a 141-residue protein sequence, read N- to C-terminus: Lysozyme 1 (141 aa).

A signal peptide spans 1–19 (MKFFIVLVAALALAAPAMG). A C-type lysozyme domain is found at 20-141 (KTFTRCSLAR…GSLPSINDCF (122 aa)). 4 disulfide bridges follow: Cys-25–Cys-140, Cys-46–Cys-130, Cys-81–Cys-97, and Cys-93–Cys-111. Residue Glu-51 is part of the active site. The N-linked (GlcNAc...) asparagine glycan is linked to Asn-65. The active site involves Asp-69. The N-linked (GlcNAc...) asparagine glycan is linked to Asn-104.

It belongs to the glycosyl hydrolase 22 family.

It carries out the reaction Hydrolysis of (1-&gt;4)-beta-linkages between N-acetylmuramic acid and N-acetyl-D-glucosamine residues in a peptidoglycan and between N-acetyl-D-glucosamine residues in chitodextrins.. Its function is as follows. May not function as a self-defense protein, but as a digestive enzyme, probably in the gut of the insect body. Inactive towards Micrococcus luteus. Active toward glycol chitin. The polypeptide is Lysozyme 1 (Musca domestica (House fly)).